Consider the following 343-residue polypeptide: Protein RecA (343 aa).

66–73 (GPESSGKT) contacts ATP.

This sequence belongs to the RecA family.

It is found in the cytoplasm. In terms of biological role, can catalyze the hydrolysis of ATP in the presence of single-stranded DNA, the ATP-dependent uptake of single-stranded DNA by duplex DNA, and the ATP-dependent hybridization of homologous single-stranded DNAs. It interacts with LexA causing its activation and leading to its autocatalytic cleavage. This chain is Protein RecA, found in Rickettsia africae (strain ESF-5).